A 277-amino-acid polypeptide reads, in one-letter code: Probable enoyl-CoA hydratase, mitochondrial (277 aa).

The N-terminal 42 residues, 1-42 (MLKQVIKTVSSSQAPKKYFFKQFCTSTTEKKGRVGLVTLNRP), are a transit peptide targeting the mitochondrion. Substrate-binding positions include 85–88 (ADIK) and G128.

Belongs to the enoyl-CoA hydratase/isomerase family. In terms of assembly, homohexamer; dimer of trimers.

The protein resides in the mitochondrion matrix. The enzyme catalyses a (3S)-3-hydroxyacyl-CoA = a (2E)-enoyl-CoA + H2O. It carries out the reaction a 4-saturated-(3S)-3-hydroxyacyl-CoA = a (3E)-enoyl-CoA + H2O. It catalyses the reaction (3S)-3-hydroxybutanoyl-CoA = (2E)-butenoyl-CoA + H2O. The catalysed reaction is 3-hydroxyisovaleryl-CoA = 3-methylbut-2-enoyl-CoA + H2O. The enzyme catalyses 3-hydroxypropanoyl-CoA = acryloyl-CoA + H2O. It carries out the reaction 3-hydroxybutanoyl-CoA = (2E)-butenoyl-CoA + H2O. It participates in lipid metabolism; fatty acid beta-oxidation. Functionally, straight-chain enoyl-CoA thioesters from C4 up to at least C16 are processed, although with decreasing catalytic rate. In Dictyostelium discoideum (Social amoeba), this protein is Probable enoyl-CoA hydratase, mitochondrial (echs1).